Here is a 355-residue protein sequence, read N- to C-terminus: 4-dimethylallyltryptophan N-methyltransferase easF (355 aa).

Belongs to the methyltransferase superfamily. In terms of assembly, homodimer.

The enzyme catalyses 4-(3-methylbut-2-enyl)-L-tryptophan + S-adenosyl-L-methionine = 4-(3-methylbut-2-enyl)-L-abrine + S-adenosyl-L-homocysteine + H(+). It functions in the pathway alkaloid biosynthesis; ergot alkaloid biosynthesis. Its function is as follows. 4-dimethylallyltryptophan N-methyltransferase; part of the gene cluster that mediates the biosynthesis of fungal ergot alkaloid. DmaW catalyzes the first step of ergot alkaloid biosynthesis by condensing dimethylallyl diphosphate (DMAP) and tryptophan to form 4-dimethylallyl-L-tryptophan. The second step is catalyzed by the methyltransferase easF that methylates 4-dimethylallyl-L-tryptophan in the presence of S-adenosyl-L-methionine, resulting in the formation of 4-dimethylallyl-L-abrine. The catalase easC and the FAD-dependent oxidoreductase easE then transform 4-dimethylallyl-L-abrine to chanoclavine-I which is further oxidized by easD in the presence of NAD(+), resulting in the formation of chanoclavine-I aldehyde. Agroclavine dehydrogenase easG then mediates the conversion of chanoclavine-I aldehyde to agroclavine via a non-enzymatic adduct reaction: the substrate is an iminium intermediate that is formed spontaneously from chanoclavine-I aldehyde in the presence of glutathione. Further conversion of agroclavine to paspalic acid is a two-step process involving oxidation of agroclavine to elymoclavine and of elymoclavine to paspalic acid, the second step being performed by the elymoclavine oxidase cloA. However, cloA does not encode a functional enzyme indicating that C.fusiformis terminates its ergot alkaloid pathway at elymoclavine. The polypeptide is 4-dimethylallyltryptophan N-methyltransferase easF (Claviceps fusiformis (Ergot fungus)).